The primary structure comprises 109 residues: Ribonuclease P protein component 4 (109 aa).

Residues C65, C68, C94, and C97 each contribute to the Zn(2+) site.

This sequence belongs to the eukaryotic/archaeal RNase P protein component 4 family. As to quaternary structure, consists of a catalytic RNA component and at least 4-5 protein subunits. It depends on Zn(2+) as a cofactor.

It is found in the cytoplasm. The catalysed reaction is Endonucleolytic cleavage of RNA, removing 5'-extranucleotides from tRNA precursor.. Part of ribonuclease P, a protein complex that generates mature tRNA molecules by cleaving their 5'-ends. The protein is Ribonuclease P protein component 4 of Methanococcus vannielii (strain ATCC 35089 / DSM 1224 / JCM 13029 / OCM 148 / SB).